The sequence spans 207 residues: Small ribosomal subunit protein eS1 (207 aa).

Belongs to the eukaryotic ribosomal protein eS1 family.

The protein is Small ribosomal subunit protein eS1 of Methanosarcina barkeri (strain Fusaro / DSM 804).